The primary structure comprises 466 residues: Glucose-6-phosphate 1-dehydrogenase 1 (466 aa).

NADP(+)-binding positions include serine 48, 88–89 (DV), and lysine 141. Substrate-binding residues include histidine 171, lysine 175, glutamate 209, and aspartate 228. Histidine 233 acts as the Proton acceptor in catalysis. Residues lysine 319 and lysine 324 each contribute to the substrate site.

The protein belongs to the glucose-6-phosphate dehydrogenase family.

It catalyses the reaction D-glucose 6-phosphate + NADP(+) = 6-phospho-D-glucono-1,5-lactone + NADPH + H(+). It functions in the pathway carbohydrate degradation; pentose phosphate pathway; D-ribulose 5-phosphate from D-glucose 6-phosphate (oxidative stage): step 1/3. Catalyzes the oxidation of glucose 6-phosphate to 6-phosphogluconolactone. The protein is Glucose-6-phosphate 1-dehydrogenase 1 of Mycobacterium tuberculosis (strain ATCC 25618 / H37Rv).